Consider the following 466-residue polypeptide: ATP synthase subunit beta (466 aa).

153 to 160 provides a ligand contact to ATP; the sequence is GGAGVGKT.

The protein belongs to the ATPase alpha/beta chains family. In terms of assembly, F-type ATPases have 2 components, CF(1) - the catalytic core - and CF(0) - the membrane proton channel. CF(1) has five subunits: alpha(3), beta(3), gamma(1), delta(1), epsilon(1). CF(0) has three main subunits: a(1), b(2) and c(9-12). The alpha and beta chains form an alternating ring which encloses part of the gamma chain. CF(1) is attached to CF(0) by a central stalk formed by the gamma and epsilon chains, while a peripheral stalk is formed by the delta and b chains.

Its subcellular location is the cell membrane. The catalysed reaction is ATP + H2O + 4 H(+)(in) = ADP + phosphate + 5 H(+)(out). Produces ATP from ADP in the presence of a proton gradient across the membrane. The catalytic sites are hosted primarily by the beta subunits. This chain is ATP synthase subunit beta, found in Clostridium acetobutylicum (strain ATCC 824 / DSM 792 / JCM 1419 / IAM 19013 / LMG 5710 / NBRC 13948 / NRRL B-527 / VKM B-1787 / 2291 / W).